The chain runs to 107 residues: Integration host factor subunit beta (107 aa).

The interval 56–107 (RPSRVGRNPKSGEKVLVPEKHVPHFKPGKELRERVDRNAGEPLKADAADDDL) is disordered. Over residues 65–107 (KSGEKVLVPEKHVPHFKPGKELRERVDRNAGEPLKADAADDDL) the composition is skewed to basic and acidic residues.

The protein belongs to the bacterial histone-like protein family. Heterodimer of an alpha and a beta chain.

This protein is one of the two subunits of integration host factor, a specific DNA-binding protein that functions in genetic recombination as well as in transcriptional and translational control. The sequence is that of Integration host factor subunit beta from Paraburkholderia phymatum (strain DSM 17167 / CIP 108236 / LMG 21445 / STM815) (Burkholderia phymatum).